The sequence spans 217 residues: Small ribosomal subunit protein uS3 (217 aa).

A KH type-2 domain is found at 38–106 (IRQLIQTKLA…QVHINIVEIK (69 aa)).

The protein belongs to the universal ribosomal protein uS3 family. As to quaternary structure, part of the 30S ribosomal subunit. Forms a tight complex with proteins S10 and S14.

Functionally, binds the lower part of the 30S subunit head. Binds mRNA in the 70S ribosome, positioning it for translation. In Lactococcus lactis subsp. lactis (strain IL1403) (Streptococcus lactis), this protein is Small ribosomal subunit protein uS3.